We begin with the raw amino-acid sequence, 454 residues long: Mitochondrial dynamics protein MID49 (454 aa).

Over 1–22 (MAEFSQKQRKQSGSEGLGSVVD) the chain is Mitochondrial intermembrane. Residues 23 to 43 (FLLANARLVLGVGGAAVLGIA) form a helical membrane-spanning segment. Topologically, residues 44-454 (TLAVKRLIDR…SGLQVPESLF (411 aa)) are cytoplasmic. The disordered stretch occupies residues 76 to 113 (ATSPQKPQPPPAAFSQPLATGSPSPSVPVEPTPIHSPT).

This sequence belongs to the MID49/MID51 family. As to quaternary structure, interacts with DNM1L.

The protein localises to the mitochondrion outer membrane. Functionally, mitochondrial outer membrane protein which regulates mitochondrial organization. It is required for mitochondrial fission and promotes the recruitment and association of the fission mediator dynamin-related protein 1 (DNM1L) to the mitochondrial surface independently of the mitochondrial fission FIS1 and MFF proteins. Regulates DNM1L GTPase activity. This chain is Mitochondrial dynamics protein MID49 (Mief2), found in Mus musculus (Mouse).